The following is a 183-amino-acid chain: Caspase recruitment domain-containing protein 19 (183 aa).

A disulfide bridge links Cys7 with Cys77. A CARD domain is found at 8-99; it reads DRLVQDTPFL…PLHSCLPSRH (92 aa). The chain crosses the membrane as a helical span at residues 122-142; it reads GPVAFLTCLGLAAGLALLIYC.

Associates with BCL10 by CARD-CARD interaction.

It localises to the endoplasmic reticulum membrane. It is found in the mitochondrion membrane. Plays a role in inhibiting the effects of BCL10-induced activation of NF-kappa-B. May inhibit the phosphorylation of BCL10 in a CARD-dependent manner. This is Caspase recruitment domain-containing protein 19 (CARD19) from Bos taurus (Bovine).